Consider the following 715-residue polypeptide: Lactococcin transport/processing ATP-binding protein LcnC-like (715 aa).

Positions 11-138 constitute a Peptidase C39 domain; sequence QVDEMDCGCA…SEWTGISLFL (128 aa). Cys17 is an active-site residue. Helical transmembrane passes span 167–187, 197–217, 237–257, 282–302, and 307–327; these read VILNIVIASFIVTLINILGSY, IPNALMGTLGIISVGLLLTYI, LAIDVILSYIRHIFQLPMSFF, TILSLFLDLTIVLMTGLILGL, and LFLLVLLAIPLYIVVIIIFTP. The 283-residue stretch at 168 to 450 folds into the ABC transmembrane type-1 domain; sequence ILNIVIASFI…IINLQTKLQK (283 aa). An ABC transporter domain is found at 482–715; it reads LNMSEISYQY…NGFYAQLYHN (234 aa). 515–522 is an ATP binding site; the sequence is GISGSGKS.

This sequence belongs to the ABC transporter superfamily. HlyB family.

Its subcellular location is the cell membrane. Involved in the export process of a bacteriocin lactococcin. This Lactococcus lactis subsp. lactis (strain IL1403) (Streptococcus lactis) protein is Lactococcin transport/processing ATP-binding protein LcnC-like (lcnC).